The following is a 604-amino-acid chain: Elongation factor 4 (604 aa).

The region spanning 7–190 is the tr-type G domain; that stretch reads SRLRNFCIIA…IVDRVPAPPD (184 aa). GTP-binding positions include 19–24 and 136–139; these read DHGKST and NKID.

This sequence belongs to the TRAFAC class translation factor GTPase superfamily. Classic translation factor GTPase family. LepA subfamily.

Its subcellular location is the cell inner membrane. The catalysed reaction is GTP + H2O = GDP + phosphate + H(+). Required for accurate and efficient protein synthesis under certain stress conditions. May act as a fidelity factor of the translation reaction, by catalyzing a one-codon backward translocation of tRNAs on improperly translocated ribosomes. Back-translocation proceeds from a post-translocation (POST) complex to a pre-translocation (PRE) complex, thus giving elongation factor G a second chance to translocate the tRNAs correctly. Binds to ribosomes in a GTP-dependent manner. This Synechococcus sp. (strain RCC307) protein is Elongation factor 4.